A 153-amino-acid polypeptide reads, in one-letter code: SKP1-like protein 5 (153 aa).

The interval 90 to 153 (MMAANYLNIQ…IREENQWAFQ (64 aa)) is interaction with the F-box domain of F-box proteins.

The protein belongs to the SKP1 family. As to quaternary structure, part of a SCF (SKP1-cullin-F-box) protein ligase complex. Interacts with PP2A13. Restricted to inflorescences, especially in the inflorescence meristem (IM).

It is found in the nucleus. It participates in protein modification; protein ubiquitination. Its function is as follows. Involved in ubiquitination and subsequent proteasomal degradation of target proteins. Together with CUL1, RBX1 and a F-box protein, it forms a SCF E3 ubiquitin ligase complex. The functional specificity of this complex depends on the type of F-box protein. In the SCF complex, it serves as an adapter that links the F-box protein to CUL1. This chain is SKP1-like protein 5 (ASK5), found in Arabidopsis thaliana (Mouse-ear cress).